The chain runs to 143 residues: FIS1-related protein fis-1 (143 aa).

Residues 121 to 141 (LGLLGGAVAVVGGLVIAGLAF) form a helical membrane-spanning segment.

This sequence belongs to the FIS1 family.

The protein resides in the mitochondrion outer membrane. It is found in the peroxisome membrane. Its function is as follows. Involved in the fragmentation of the mitochondrial network. Involved in perinuclear clustering of the mitochondrial network. Plays a role in removal of ultraviolet C radiation-induced mitochondrial DNA damage. May act, redundantly with fis-2, downstream of mitochondrial fission, before the fission products participate in either mitochondrial homeostasis, mitophagy, or apoptosis. This is FIS1-related protein fis-1 from Caenorhabditis elegans.